We begin with the raw amino-acid sequence, 152 residues long: 3-dehydroquinate dehydratase (152 aa).

Y26 (proton acceptor) is an active-site residue. Substrate-binding residues include N78, H84, and D91. H104 serves as the catalytic Proton donor. Substrate is bound by residues 105 to 106 (IS) and R115.

Belongs to the type-II 3-dehydroquinase family. Homododecamer.

It catalyses the reaction 3-dehydroquinate = 3-dehydroshikimate + H2O. It participates in metabolic intermediate biosynthesis; chorismate biosynthesis; chorismate from D-erythrose 4-phosphate and phosphoenolpyruvate: step 3/7. Its function is as follows. Catalyzes a trans-dehydration via an enolate intermediate. The sequence is that of 3-dehydroquinate dehydratase from Buchnera aphidicola subsp. Cinara cedri (strain Cc).